The following is a 317-amino-acid chain: Ribosomal protein L11 methyltransferase (317 aa).

The S-adenosyl-L-methionine site is built by T158, G179, D201, and N244.

Belongs to the methyltransferase superfamily. PrmA family.

The protein localises to the cytoplasm. It carries out the reaction L-lysyl-[protein] + 3 S-adenosyl-L-methionine = N(6),N(6),N(6)-trimethyl-L-lysyl-[protein] + 3 S-adenosyl-L-homocysteine + 3 H(+). In terms of biological role, methylates ribosomal protein L11. The polypeptide is Ribosomal protein L11 methyltransferase (Streptococcus mutans serotype c (strain ATCC 700610 / UA159)).